A 1317-amino-acid polypeptide reads, in one-letter code: WASH complex subunit 2 (1317 aa).

Residues 1–219 (MNRTSPDSER…VGSDRGSIVD (219 aa)) form a sufficient for interaction with WASHC3, WASHC4 and WASHC5; required for interaction with WASHC1 region. Ser-157, Ser-159, Ser-204, Ser-205, and Ser-209 each carry phosphoserine. Positions 201–213 (GELSSEEGSVGSD) are enriched in low complexity. The interval 201 to 630 (GELSSEEGSV…RKSKGELWDS (430 aa)) is disordered. 2 stretches are compositionally biased toward acidic residues: residues 219–232 (DSEE…SDED) and 250–274 (DEEE…EDIE). Ser-284 carries the phosphoserine modification. Composition is skewed to basic and acidic residues over residues 289–325 (LAAR…RTPP) and 366–376 (DLFRETSRDRP). Thr-323 carries the post-translational modification Phosphothreonine. Residues 348–582 (SRGGLFSGQG…QVSSQQPQSQ (235 aa)) are sufficient for interaction with CCDC93. The segment at 349–1317 (RGGLFSGQGL…DDPLNAFGSQ (969 aa)) is interaction with VPS35. An LFa 1 motif is present at residues 358–368 (LFDDEDESDLF). The span at 379-399 (APVSEESSSPKPGKKIPAGAV) shows a compositional bias: low complexity. 2 positions are modified to phosphoserine: Ser-385 and Ser-387. Short sequence motifs (LFa) lie at residues 433–445 (LFDD…DNFF) and 464–473 (IFDDEEGDLF). Residues 500–518 (TLPSSKNPKLVSETKTQKG) show a composition bias toward polar residues. 2 short sequence motifs (LFa) span residues 519-530 (LFSDEEDSEDLF) and 554-565 (LFGDEDEEDNLF). 2 positions are modified to phosphoserine: Ser-521 and Ser-526. Positions 529–548 (LFSSQNSSKSKSASLLSSQL) are enriched in low complexity. Over residues 569–582 (PAKKQVSSQQPQSQ) the composition is skewed to low complexity. A compositionally biased stretch (basic and acidic residues) spans 583–592 (EKPKPSEQPK). The LFa 6 signature appears at 599–611 (LFSSDEEDQWNIT). Phosphoserine occurs at positions 601 and 602. Basic and acidic residues predominate over residues 613–627 (SHTKLATDRKSKGEL). 2 consecutive short sequence motifs (LFa) follow at residues 646–657 (LFEEDDDEADLF) and 673–685 (LFED…SSLF). The tract at residues 667–817 (TQRTSLLFED…GRPKSTGVFQ (151 aa)) is disordered. Residue Ser-710 is modified to Phosphoserine. A compositionally biased stretch (basic and acidic residues) spans 717 to 744 (VPSRVKSVDVKVGNGKEADVAKVTEKEG). Residues Ser-763 and Ser-778 each carry the phosphoserine modification. Basic and acidic residues predominate over residues 788–810 (EDQSNTHVSKNDAEKGLKTDGRP). 2 short sequence motifs (LFa) span residues 815 to 823 (VFQDEELLF) and 832 to 838 (DPDVDLF). Ser-853 bears the Phosphoserine mark. An LFa 11 motif is present at residues 854–864 (LFGDDEDYDLF). Disordered regions lie at residues 867-926 (AKTQ…REPS) and 960-1079 (ELAF…AAPP). The segment covering 874–906 (PEKKGALKKDRPVSLKNEEAPESTEGSKEKSLW) has biased composition (basic and acidic residues). The interval 912 to 1317 (QDSSGLTPFK…DDPLNAFGSQ (406 aa)) is interaction with phospholipids. The segment covering 1003–1021 (NKSRVKVRGKRRPQTRAAR) has biased composition (basic residues). Positions 1004 to 1022 (KSRVKVRGKRRPQTRAARR) are required for interaction with F-actin-capping protein subunit alpha (CAPZA1 or CAPZA2 or CAPZA3). Phosphoserine is present on residues Ser-1029, Ser-1047, Ser-1064, and Ser-1092. The short motif at 1107–1114 (LFDSGDIF) is the LFa 12 element. Residues 1119-1141 (GSQSMEGTKVKAAETPAHLSGGS) are disordered. Short sequence motifs (LFa) lie at residues 1147–1161 (VFPA…DDLF), 1177–1185 (LLEDEDDLF), 1210–1216 (IFEDDIF), 1238–1246 (LFDDNIDIF), 1266–1275 (VFDDDTDDIF), and 1306–1314 (IFDDPLNAF). Residues Ser-1152, Ser-1155, and Ser-1156 each carry the phosphoserine modification. Residues 1158 to 1183 (DDLFQTVKPRPAKKRNPFPLLEDEDD) are disordered. Positions 1277–1317 (SGLQAKKSKPKSQSAEATSELRSDHKVSNIFDDPLNAFGSQ) are disordered. Ser-1316 is modified (phosphoserine).

It belongs to the FAM21 family. In terms of assembly, component of the WASH core complex also described as WASH regulatory complex SHRC composed of WASHC1, WASHC2, WASHC3, WASHC4 and WASHC5; in the complex interacts (via N-terminus) directly with WASHC1. The WASH core complex associates via WASHC2 with the F-actin-capping protein dimer (formed by CAPZA1, CAPZA2 or CAPZA3 and CAPZB) in a transient or substoichiometric manner which was initially described as WASH complex. Interacts with VPS35; mediates the association with the retromer CSC complex. Interacts with FKBP15. Interacts with CCDC93, CCDC22, C16orf62 homolog; indicative for an association of the WASH core complex with the CCC complex. Directly interacts with TBC1D23.

It localises to the early endosome membrane. The protein resides in the cell membrane. In terms of biological role, acts as a component of the WASH core complex that functions as a nucleation-promoting factor (NPF) at the surface of endosomes, where it recruits and activates the Arp2/3 complex to induce actin polymerization, playing a key role in the fission of tubules that serve as transport intermediates during endosome sorting. Mediates the recruitment of the WASH core complex to endosome membranes via binding to phospholipids and VPS35 of the retromer CSC. Mediates the recruitment of the F-actin-capping protein dimer to the WASH core complex probably promoting localized F-actin polymerization needed for vesicle scission. Via its C-terminus binds various phospholipids, most strongly phosphatidylinositol 4-phosphate (PtdIns-(4)P), phosphatidylinositol 5-phosphate (PtdIns-(5)P) and phosphatidylinositol 3,5-bisphosphate (PtdIns-(3,5)P2). Involved in the endosome-to-plasma membrane trafficking and recycling of SNX27-retromer-dependent cargo proteins, such as GLUT1. Required for the association of DNAJC13, ENTR1, ANKRD50 with retromer CSC subunit VPS35. Required for the endosomal recruitment of CCC complex subunits COMMD1, CCDC93 and C16orf62 homolog. In Cricetulus griseus (Chinese hamster), this protein is WASH complex subunit 2.